The following is an 83-amino-acid chain: Small ribosomal subunit protein bS16 (83 aa).

It belongs to the bacterial ribosomal protein bS16 family.

The sequence is that of Small ribosomal subunit protein bS16 from Chromobacterium violaceum (strain ATCC 12472 / DSM 30191 / JCM 1249 / CCUG 213 / NBRC 12614 / NCIMB 9131 / NCTC 9757 / MK).